The primary structure comprises 138 residues: Acidic phospholipase A2 jerdoxin (138 aa).

The first 16 residues, Met1–Gly16, serve as a signal peptide directing secretion. 7 cysteine pairs are disulfide-bonded: Cys42-Cys131, Cys44-Cys60, Cys59-Cys111, Cys65-Cys138, Cys66-Cys104, Cys73-Cys97, and Cys91-Cys102. The Ca(2+) site is built by Tyr43, Gly45, and Gly47. His63 is an active-site residue. Residue Asp64 participates in Ca(2+) binding. Residue Asp105 is part of the active site.

It belongs to the phospholipase A2 family. Group II subfamily. D49 sub-subfamily. Monomer. Requires Ca(2+) as cofactor. In terms of tissue distribution, expressed by the venom gland.

It localises to the secreted. It carries out the reaction a 1,2-diacyl-sn-glycero-3-phosphocholine + H2O = a 1-acyl-sn-glycero-3-phosphocholine + a fatty acid + H(+). Its function is as follows. Snake venom phospholipase A2 (PLA2) that displays edema-inducing activities, exhibits indirect hemolytic activity, and inhibits ADP-induced platelet aggregation. PLA2 catalyzes the calcium-dependent hydrolysis of the 2-acyl groups in 3-sn-phosphoglycerides. This chain is Acidic phospholipase A2 jerdoxin, found in Protobothrops jerdonii (Jerdon's pitviper).